The following is a 349-amino-acid chain: tRNA pseudouridine synthase D (349 aa).

F27 is a binding site for substrate. The active-site Nucleophile is the D80. N129 is a substrate binding site. The TRUD domain occupies 155-303; sequence GVPNYFGAQR…VEAARRAMLL (149 aa). Residue F329 coordinates substrate.

The protein belongs to the pseudouridine synthase TruD family.

The catalysed reaction is uridine(13) in tRNA = pseudouridine(13) in tRNA. Its function is as follows. Responsible for synthesis of pseudouridine from uracil-13 in transfer RNAs. The chain is tRNA pseudouridine synthase D from Escherichia coli O7:K1 (strain IAI39 / ExPEC).